The primary structure comprises 350 residues: MGGVLTLDAAFLGSVPADLGKALLERARADCGPVLHRAIESMREPLATMAGYHLGWWNADRSTAAGSSGKYFRAALVYAAAAACGGDVGDATPVSAAVELVHNFTLLHDDVMDGDATRRGRPTVWSVWGVGVAILLGDALHATAVRILTGLTDECVAVRAIRRLQMSCLDLCIGQFEDCLLEGQPEVTVDDYLRMAAGKTAALTGCCCALGALVANADDATIAALERFGHELGLAFQCVDDLIGIWGDPGVTGKPVGNDLARRKATLPVVAALNSRSEAATELAALYQAPAAMTASDVERATALVKVAGGGHVAQRCADERIQAAIAALPDAVRSPDLIALSQLICRREC.

Residues lysine 70, arginine 73, and histidine 102 each contribute to the isopentenyl diphosphate site. Mg(2+) is bound by residues aspartate 109 and aspartate 113. Positions 109 to 113 (DDVMD) match the DDXXD motif motif. Arginine 119 is a binding site for isopentenyl diphosphate. The DDXXD motif motif lies at 240–244 (DDLIG).

It belongs to the FPP/GGPP synthase family. Mg(2+) is required as a cofactor.

The catalysed reaction is isopentenyl diphosphate + (2E,6E)-farnesyl diphosphate = (2E,6E,10E)-geranylgeranyl diphosphate + diphosphate. It functions in the pathway isoprenoid biosynthesis; geranylgeranyl diphosphate biosynthesis; geranylgeranyl diphosphate from farnesyl diphosphate and isopentenyl diphosphate: step 1/1. In terms of biological role, catalyzes the condensation of isopentenyl pyrophosphate (IPP) with (2E,6E)-farnesyl diphosphate (E,E-FPP) to yield geranylgeranyl diphosphate (GGPP). This Mycobacterium tuberculosis (strain ATCC 25618 / H37Rv) protein is Geranylgeranyl diphosphate synthase.